A 32-amino-acid chain; its full sequence is Ranatuerin-2La (32 aa).

The cysteines at positions 27 and 32 are disulfide-linked.

Expressed by the skin glands.

The protein localises to the secreted. Functionally, antibacterial activity against Gram-positive bacterium S.aureus and Gram-negative bacterium E.coli. Weak activity against C.albicans. The sequence is that of Ranatuerin-2La from Rana luteiventris (Columbia spotted frog).